The sequence spans 75 residues: Dermaseptin-related peptide (75 aa).

An N-terminal signal peptide occupies residues 1–22 (MAFLNKSLLLVLFLGLVSLSIC). The propeptide occupies 23 to 43 (EEERRENEDEEEQEDDEQSEM). The disordered stretch occupies residues 24–44 (EERRENEDEEEQEDDEQSEMR). Residues 30-40 (EDEEEQEDDEQ) are compositionally biased toward acidic residues. Gln72 is subject to Glutamine amide. Residues 74 to 75 (EQ) constitute a propeptide that is removed on maturation.

Expressed by the skin glands.

The protein resides in the secreted. Functionally, has antibacterial activity against Gram-positive bacterium M.luteus NCT C2665 but not against Gram-negative bacterium E.coli K12D31. The polypeptide is Dermaseptin-related peptide (Agalychnis callidryas (Red-eyed tree frog)).